The chain runs to 269 residues: Formamidopyrimidine-DNA glycosylase (269 aa).

The active-site Schiff-base intermediate with DNA is P2. E3 serves as the catalytic Proton donor. Catalysis depends on K57, which acts as the Proton donor; for beta-elimination activity. DNA-binding residues include H90, R109, and K150. The FPG-type zinc finger occupies 235-269 (QVYGRKGEPCRICGMPVVGTKHAQRATFYCRQCQK). R259 functions as the Proton donor; for delta-elimination activity in the catalytic mechanism.

It belongs to the FPG family. As to quaternary structure, monomer. The cofactor is Zn(2+).

The catalysed reaction is Hydrolysis of DNA containing ring-opened 7-methylguanine residues, releasing 2,6-diamino-4-hydroxy-5-(N-methyl)formamidopyrimidine.. It catalyses the reaction 2'-deoxyribonucleotide-(2'-deoxyribose 5'-phosphate)-2'-deoxyribonucleotide-DNA = a 3'-end 2'-deoxyribonucleotide-(2,3-dehydro-2,3-deoxyribose 5'-phosphate)-DNA + a 5'-end 5'-phospho-2'-deoxyribonucleoside-DNA + H(+). In terms of biological role, involved in base excision repair of DNA damaged by oxidation or by mutagenic agents. Acts as a DNA glycosylase that recognizes and removes damaged bases. Has a preference for oxidized purines, such as 7,8-dihydro-8-oxoguanine (8-oxoG). Has AP (apurinic/apyrimidinic) lyase activity and introduces nicks in the DNA strand. Cleaves the DNA backbone by beta-delta elimination to generate a single-strand break at the site of the removed base with both 3'- and 5'-phosphates. In Klebsiella pneumoniae subsp. pneumoniae (strain ATCC 700721 / MGH 78578), this protein is Formamidopyrimidine-DNA glycosylase.